A 202-amino-acid chain; its full sequence is Large ribosomal subunit protein bL25 (202 aa).

It belongs to the bacterial ribosomal protein bL25 family. CTC subfamily. In terms of assembly, part of the 50S ribosomal subunit; part of the 5S rRNA/L5/L18/L25 subcomplex. Contacts the 5S rRNA. Binds to the 5S rRNA independently of L5 and L18.

In terms of biological role, this is one of the proteins that binds to the 5S RNA in the ribosome where it forms part of the central protuberance. The protein is Large ribosomal subunit protein bL25 of Corynebacterium efficiens (strain DSM 44549 / YS-314 / AJ 12310 / JCM 11189 / NBRC 100395).